The chain runs to 171 residues: Orotate phosphoribosyltransferase (171 aa).

Residues Arg-85, Lys-86, Arg-88, His-90, and 110–118 (EDVVTTGNS) each bind 5-phospho-alpha-D-ribose 1-diphosphate. Orotate contacts are provided by Thr-114 and Arg-142.

Belongs to the purine/pyrimidine phosphoribosyltransferase family. PyrE subfamily. As to quaternary structure, homodimer. It depends on Mg(2+) as a cofactor.

The catalysed reaction is orotidine 5'-phosphate + diphosphate = orotate + 5-phospho-alpha-D-ribose 1-diphosphate. Its pathway is pyrimidine metabolism; UMP biosynthesis via de novo pathway; UMP from orotate: step 1/2. In terms of biological role, catalyzes the transfer of a ribosyl phosphate group from 5-phosphoribose 1-diphosphate to orotate, leading to the formation of orotidine monophosphate (OMP). The protein is Orotate phosphoribosyltransferase of Thermoplasma acidophilum (strain ATCC 25905 / DSM 1728 / JCM 9062 / NBRC 15155 / AMRC-C165).